Reading from the N-terminus, the 177-residue chain is Ribonuclease H (177 aa).

The region spanning 1–142 (MSKQVEIFTD…ADELAREGMA (142 aa)) is the RNase H type-1 domain. Mg(2+)-binding residues include aspartate 10, glutamate 48, aspartate 70, and aspartate 134. Residues 126-138 (GHTENERADELAR) are compositionally biased toward basic and acidic residues. Residues 126 to 177 (GHTENERADELAREGMAPFKKGSFKPAASAPKPDAQLKQPVATKARRSTQSY) are disordered.

Belongs to the RNase H family. As to quaternary structure, monomer. It depends on Mg(2+) as a cofactor.

It localises to the cytoplasm. The catalysed reaction is Endonucleolytic cleavage to 5'-phosphomonoester.. Functionally, endonuclease that specifically degrades the RNA of RNA-DNA hybrids. In Mesorhizobium japonicum (strain LMG 29417 / CECT 9101 / MAFF 303099) (Mesorhizobium loti (strain MAFF 303099)), this protein is Ribonuclease H.